Consider the following 138-residue polypeptide: Small ribosomal subunit protein uS11c (138 aa).

Residues 1–22 (MAKPIPRIGSQRNRRINSRKNA) form a disordered region. Basic residues predominate over residues 12–22 (RNRRINSRKNA).

The protein belongs to the universal ribosomal protein uS11 family. As to quaternary structure, part of the 30S ribosomal subunit.

It is found in the plastid. The protein localises to the chloroplast. The sequence is that of Small ribosomal subunit protein uS11c from Fagopyrum esculentum subsp. ancestrale (Wild buckwheat).